The chain runs to 354 residues: Fructose-bisphosphate aldolase 2 (354 aa).

A D-glyceraldehyde 3-phosphate-binding site is contributed by S50. The active-site Proton donor is D83. H84, D105, E142, and H198 together coordinate Zn(2+). G199 provides a ligand contact to dihydroxyacetone phosphate. Zn(2+) is bound at residue H232. Dihydroxyacetone phosphate contacts are provided by residues 233-235 and 275-278; these read GSS and NIDT.

It belongs to the class II fructose-bisphosphate aldolase family. As to quaternary structure, homodimer. Zn(2+) is required as a cofactor.

It carries out the reaction beta-D-fructose 1,6-bisphosphate = D-glyceraldehyde 3-phosphate + dihydroxyacetone phosphate. It participates in carbohydrate biosynthesis; Calvin cycle. The protein operates within carbohydrate degradation; glycolysis; D-glyceraldehyde 3-phosphate and glycerone phosphate from D-glucose: step 4/4. Functionally, catalyzes the aldol condensation of dihydroxyacetone phosphate (DHAP or glycerone-phosphate) with glyceraldehyde 3-phosphate (G3P) to form fructose 1,6-bisphosphate (FBP) in gluconeogenesis and the reverse reaction in glycolysis. The sequence is that of Fructose-bisphosphate aldolase 2 (cfxB) from Cereibacter sphaeroides (Rhodobacter sphaeroides).